A 461-amino-acid chain; its full sequence is MIKVGILDSTLREGEQTPGVIFTVDQRVEIAKALSDLGVSMIEAGHPAVSPDIYEGIKRIVKLKKEGIITSEIVGHSRAVKRDIEIAAELEVNRIAIFYGVSDLHLKAKHKATREEALRTIAETISYAKNHGVKVRFTAEDGSRTDFDFLVTVSKTARDAGADRVSIADTVGILYPSKTKELFSALTREVPNLEFDIHAHNDLGLAVANALAAIEGGATIIHATVNGLGERVGIVPLQQIAAAIKYHFGIEVVKLDKLQYVSSLVEKYSGIPMPPNYPITGDYAFLHKAGVHVAGVLNDPRTYEFMPPETFGRTRDYTIDKYTGKHALRDKYEKLGVKISDAEMDQILAKIKSNTTIRFYRDVDLLELAEEVTGRVLKPRPPEQIEALISVKCDSNVYTTSVTRRLSVINGVKEVMEISGDYDILVKVQAKDSNELNQIIESIRATKGVRSTLTSLVLKKM.

Residues 4–259 form the Pyruvate carboxyltransferase domain; it reads VGILDSTLRE…IEVVKLDKLQ (256 aa). Arg12 lines the 2-oxoglutarate pocket. Glu13 serves as a coordination point for Mg(2+). Residues His76, Arg136, and Thr170 each contribute to the 2-oxoglutarate site. Mg(2+) is bound by residues His198 and His200. Catalysis depends on His292, which acts as the Proton acceptor.

This sequence belongs to the alpha-IPM synthase/homocitrate synthase family. Homocitrate synthase LYS20/LYS21 subfamily. The cofactor is Mg(2+). Requires Mn(2+) as cofactor.

The enzyme catalyses acetyl-CoA + 2-oxoglutarate + H2O = (2R)-homocitrate + CoA + H(+). It functions in the pathway amino-acid biosynthesis; L-lysine biosynthesis via AAA pathway; L-alpha-aminoadipate from 2-oxoglutarate: step 1/5. Catalyzes the aldol-type condensation of 2-oxoglutarate with acetyl-CoA to yield homocitrate. Carries out the first step of the alpha-aminoadipate (AAA) lysine biosynthesis pathway. In Saccharolobus islandicus (strain L.S.2.15 / Lassen #1) (Sulfolobus islandicus), this protein is Homocitrate synthase.